Here is a 188-residue protein sequence, read N- to C-terminus: Inner membrane-spanning protein YciB (188 aa).

The next 5 membrane-spanning stretches (helical) occupy residues 23–43, 49–69, 73–93, 116–133, and 149–169; these read FQKA…IGYA, AMLP…GLIF, VFVK…LVGG, WRTL…VAII, and FRLA…PFMM.

The protein belongs to the YciB family.

The protein localises to the cell inner membrane. In terms of biological role, plays a role in cell envelope biogenesis, maintenance of cell envelope integrity and membrane homeostasis. The protein is Inner membrane-spanning protein YciB of Caulobacter vibrioides (strain ATCC 19089 / CIP 103742 / CB 15) (Caulobacter crescentus).